Reading from the N-terminus, the 184-residue chain is Cytidylate kinase (184 aa).

Residue 8–16 (GQPGSGKTT) coordinates ATP.

This sequence belongs to the cytidylate kinase family. Type 2 subfamily.

The protein localises to the cytoplasm. The enzyme catalyses CMP + ATP = CDP + ADP. The catalysed reaction is dCMP + ATP = dCDP + ADP. This chain is Cytidylate kinase, found in Pyrobaculum aerophilum (strain ATCC 51768 / DSM 7523 / JCM 9630 / CIP 104966 / NBRC 100827 / IM2).